We begin with the raw amino-acid sequence, 943 residues long: Zinc finger BED domain-containing protein 39 (943 aa).

The tract at residues 1-99 is disordered; sequence MSSVSSDIDG…DIAMDVSGST (99 aa). Over residues 12–21 the composition is skewed to basic and acidic residues; that stretch reads PETKRFRIDV. A compositionally biased stretch (low complexity) spans 50 to 72; sequence SPAAPSSASYRSSNSSVISSSES. Residues 73–85 are compositionally biased toward basic and acidic residues; that stretch reads PIKDEDVDVHDGQ. Residues 184–235 form a BED-type; degenerate zinc finger; it reads NKQTPVWKYFVYNKTENLSRCIVGDCTYMLKGPHTSTLACHLKKHTREYSEF. Disordered regions lie at residues 242–315 and 328–348; these read YSRT…KEPS and RQATNNSNGSPPTTPHAPQLP. Residues 262–276 are compositionally biased toward polar residues; the sequence is TLQTQNTPRQTGSPA. Residues 277–292 show a composition bias toward low complexity; sequence STCNTNSNTSSSVSSG. Positions 328 to 338 are enriched in polar residues; sequence RQATNNSNGSP.

As to expression, expressed in distal tip cells and in germline cells.

It is found in the nucleus. Its subcellular location is the cytoplasm. Functionally, regulates the timing and orientation of distal tip cell migration during gonadal development. May act in parallel to cacn-1 and Rac GTPases to control the anterior and posterior migration of distal tip cells. In Caenorhabditis elegans, this protein is Zinc finger BED domain-containing protein 39.